We begin with the raw amino-acid sequence, 442 residues long: Histidinol dehydrogenase (442 aa).

Positions 138, 199, and 222 each coordinate NAD(+). Substrate is bound by residues serine 245, glutamine 267, and histidine 270. Positions 267 and 270 each coordinate Zn(2+). Residues glutamate 335 and histidine 336 each act as proton acceptor in the active site. Residues histidine 336, aspartate 369, glutamate 423, and histidine 428 each contribute to the substrate site. A Zn(2+)-binding site is contributed by aspartate 369. Histidine 428 lines the Zn(2+) pocket.

This sequence belongs to the histidinol dehydrogenase family. Zn(2+) is required as a cofactor.

The catalysed reaction is L-histidinol + 2 NAD(+) + H2O = L-histidine + 2 NADH + 3 H(+). It participates in amino-acid biosynthesis; L-histidine biosynthesis; L-histidine from 5-phospho-alpha-D-ribose 1-diphosphate: step 9/9. Catalyzes the sequential NAD-dependent oxidations of L-histidinol to L-histidinaldehyde and then to L-histidine. The chain is Histidinol dehydrogenase from Ralstonia nicotianae (strain ATCC BAA-1114 / GMI1000) (Ralstonia solanacearum).